Reading from the N-terminus, the 326-residue chain is N-acetyl-gamma-glutamyl-phosphate reductase (326 aa).

C155 is an active-site residue.

The protein belongs to the NAGSA dehydrogenase family. Type 1 subfamily.

Its subcellular location is the cytoplasm. The enzyme catalyses N-acetyl-L-glutamate 5-semialdehyde + phosphate + NADP(+) = N-acetyl-L-glutamyl 5-phosphate + NADPH + H(+). It participates in amino-acid biosynthesis; L-arginine biosynthesis; N(2)-acetyl-L-ornithine from L-glutamate: step 3/4. Catalyzes the NADPH-dependent reduction of N-acetyl-5-glutamyl phosphate to yield N-acetyl-L-glutamate 5-semialdehyde. The sequence is that of N-acetyl-gamma-glutamyl-phosphate reductase from Shewanella baltica (strain OS185).